The chain runs to 238 residues: Survival of motor neuron-related-splicing factor 30 (238 aa).

In terms of domain architecture, Tudor spans 72–132 (SWKVGDKCMA…KPVEEGRKAK (61 aa)). A Nuclear localization signal motif is present at residues 142 to 160 (KKEMIAQQREYKKKKALKK). At Ser-201 the chain carries Phosphoserine. At Lys-219 the chain carries N6-acetyllysine.

This sequence belongs to the SMN family. Associates with spliceosomes. Associates with U4/U5/U6 tri-snRNP and with U2 snRNP.

The protein localises to the nucleus speckle. It is found in the nucleus. It localises to the cajal body. Functionally, involved in spliceosome assembly. The chain is Survival of motor neuron-related-splicing factor 30 (Smndc1) from Rattus norvegicus (Rat).